Reading from the N-terminus, the 274-residue chain is Large ribosomal subunit protein uL2 (274 aa).

Disordered regions lie at residues 37–59 (KAKN…GGHK) and 222–262 (GAAM…RTNK). The span at 50 to 59 (TTRHKGGGHK) shows a compositional bias: basic residues.

This sequence belongs to the universal ribosomal protein uL2 family. In terms of assembly, part of the 50S ribosomal subunit. Forms a bridge to the 30S subunit in the 70S ribosome.

Its function is as follows. One of the primary rRNA binding proteins. Required for association of the 30S and 50S subunits to form the 70S ribosome, for tRNA binding and peptide bond formation. It has been suggested to have peptidyltransferase activity; this is somewhat controversial. Makes several contacts with the 16S rRNA in the 70S ribosome. The polypeptide is Large ribosomal subunit protein uL2 (Alcanivorax borkumensis (strain ATCC 700651 / DSM 11573 / NCIMB 13689 / SK2)).